The following is a 155-amino-acid chain: D-aminoacyl-tRNA deacylase (155 aa).

The short motif at 137-138 is the Gly-cisPro motif, important for rejection of L-amino acids element; that stretch reads GP.

It belongs to the DTD family. In terms of assembly, homodimer.

The protein resides in the cytoplasm. The catalysed reaction is glycyl-tRNA(Ala) + H2O = tRNA(Ala) + glycine + H(+). It catalyses the reaction a D-aminoacyl-tRNA + H2O = a tRNA + a D-alpha-amino acid + H(+). Functionally, an aminoacyl-tRNA editing enzyme that deacylates mischarged D-aminoacyl-tRNAs. Also deacylates mischarged glycyl-tRNA(Ala), protecting cells against glycine mischarging by AlaRS. Acts via tRNA-based rather than protein-based catalysis; rejects L-amino acids rather than detecting D-amino acids in the active site. By recycling D-aminoacyl-tRNA to D-amino acids and free tRNA molecules, this enzyme counteracts the toxicity associated with the formation of D-aminoacyl-tRNA entities in vivo and helps enforce protein L-homochirality. This Geotalea uraniireducens (strain Rf4) (Geobacter uraniireducens) protein is D-aminoacyl-tRNA deacylase.